The chain runs to 159 residues: Large ribosomal subunit protein uL11 (159 aa).

Basic and acidic residues predominate over residues 137 to 149; it reads EGKDPREVQREVD. Residues 137-159 form a disordered region; the sequence is EGKDPREVQREVDSGAWDKLLGG.

The protein belongs to the universal ribosomal protein uL11 family. Part of the ribosomal stalk of the 50S ribosomal subunit. Interacts with L10 and the large rRNA to form the base of the stalk. L10 forms an elongated spine to which L12 dimers bind in a sequential fashion forming a multimeric L10(L12)X complex.

Forms part of the ribosomal stalk which helps the ribosome interact with GTP-bound translation factors. In Korarchaeum cryptofilum (strain OPF8), this protein is Large ribosomal subunit protein uL11.